A 143-amino-acid chain; its full sequence is Antiholin-like protein LrgA (143 aa).

4 helical membrane-spanning segments follow: residues 6-26 (VYSFLSQAFIFSAIMLISNII), 30-50 (LPIPMPSSVIGLVILFSLLCL), 61-81 (LGTALTGIIGFLFVPSGISVI), and 97-117 (VIVVATVILLAVTGLFAQFIL).

The protein belongs to the CidA/LrgA family. LrgA subfamily.

The protein resides in the cell membrane. Inhibits the expression or activity of extracellular murein hydrolases by interacting, possibly with LrgB, with the holin-like protein CidA. The LrgAB and CidA proteins may affect the proton motive force of the membrane. May be involved in programmed cell death (PCD), possibly triggering PCD in response to antibiotics and environmental stresses. The sequence is that of Antiholin-like protein LrgA from Bacillus cereus (strain AH820).